Here is a 492-residue protein sequence, read N- to C-terminus: Ketol-acid reductoisomerase (NADP(+)) (492 aa).

In terms of domain architecture, KARI N-terminal Rossmann spans 17-208; that stretch reads LGQCRLMKKN…GSNKAGVLES (192 aa). NADP(+)-binding positions include 45-48, R68, S76, and S78; that span reads CGSQ. The active site involves H132. G158 provides a ligand contact to NADP(+). KARI C-terminal knotted domains are found at residues 209 to 344 and 345 to 487; these read SFVA…KAPV and YCET…MKDM. Mg(2+) is bound by residues D217, E221, E389, and E393. S414 is a binding site for substrate.

It belongs to the ketol-acid reductoisomerase family. Mg(2+) is required as a cofactor.

The enzyme catalyses (2R)-2,3-dihydroxy-3-methylbutanoate + NADP(+) = (2S)-2-acetolactate + NADPH + H(+). It carries out the reaction (2R,3R)-2,3-dihydroxy-3-methylpentanoate + NADP(+) = (S)-2-ethyl-2-hydroxy-3-oxobutanoate + NADPH + H(+). Its pathway is amino-acid biosynthesis; L-isoleucine biosynthesis; L-isoleucine from 2-oxobutanoate: step 2/4. It functions in the pathway amino-acid biosynthesis; L-valine biosynthesis; L-valine from pyruvate: step 2/4. In terms of biological role, involved in the biosynthesis of branched-chain amino acids (BCAA). Catalyzes an alkyl-migration followed by a ketol-acid reduction of (S)-2-acetolactate (S2AL) to yield (R)-2,3-dihydroxy-isovalerate. In the isomerase reaction, S2AL is rearranged via a Mg-dependent methyl migration to produce 3-hydroxy-3-methyl-2-ketobutyrate (HMKB). In the reductase reaction, this 2-ketoacid undergoes a metal-dependent reduction by NADPH to yield (R)-2,3-dihydroxy-isovalerate. This Blochmanniella floridana protein is Ketol-acid reductoisomerase (NADP(+)).